The following is a 118-amino-acid chain: DNA-binding protein inhibitor ID-3-B (118 aa).

The 53-residue stretch at 32-84 (SLKGAGIDETMGLLYDMNGCYSKLKELVPGIPQGSKLSQVEILQHVIDYIFDL) folds into the bHLH domain.

In terms of assembly, homodimer. Heterodimer with other HLH proteins. Interacts (via HLH domain) with the bHLH protein hes4/hairy2 (via Orange domain). Interacts with stat3.

The protein resides in the nucleus. In terms of biological role, transcriptional regulator (lacking a basic DNA binding domain) which negatively regulates the basic helix-loop-helix (bHLH) transcription factors by forming heterodimers and inhibiting their DNA binding and transcriptional activity. Influences cell fate decisions in the embryo by sequestering and blocking the activity of the bHLH transcription factors that control these decisions. Inhibits the binding of myogenic bHLH-containing complexes to E-box DNA, thereby preventing activation of muscle-specific target genes. Also inhibits the activity of neurogenic factor neurod1/neuroD. Plays a role in cell cycle progression and survival of neural crest progenitors; binding to either hes4-B/hairy2b or stat3 blocks the formation of transcription factor complexes and the repressor function of hes4-B/hairy2B, to allow neural crest progenitors to differentiate. May play a role in the regulation of the circadian rhythm. The sequence is that of DNA-binding protein inhibitor ID-3-B (id3-b) from Xenopus laevis (African clawed frog).